The chain runs to 399 residues: Sister chromatid cohesion protein DCC1 (399 aa).

This sequence belongs to the DCC1 family. As to quaternary structure, component of the CTF18-RFC complex which consists of CTF8, CTF18, DSCC1 and the RFC complex. Interacts with CTF8 and CTF18. Interacts with DDX11.

Its subcellular location is the nucleus. Loads PCNA onto primed templates regulating velocity, spacing and restart activity of replication forks. May couple DNA replication to sister chromatid cohesion through regulation of the acetylation of the cohesin subunit SMC3. The chain is Sister chromatid cohesion protein DCC1 (DSCC1) from Mus musculus (Mouse).